Consider the following 206-residue polypeptide: Small ribosomal subunit protein uS4 (206 aa).

The 64-residue stretch at 98-161 (RRLDNVVYRL…RSMELIKNNL (64 aa)) folds into the S4 RNA-binding domain.

It belongs to the universal ribosomal protein uS4 family. As to quaternary structure, part of the 30S ribosomal subunit. Contacts protein S5. The interaction surface between S4 and S5 is involved in control of translational fidelity.

In terms of biological role, one of the primary rRNA binding proteins, it binds directly to 16S rRNA where it nucleates assembly of the body of the 30S subunit. Its function is as follows. With S5 and S12 plays an important role in translational accuracy. This chain is Small ribosomal subunit protein uS4, found in Caldanaerobacter subterraneus subsp. tengcongensis (strain DSM 15242 / JCM 11007 / NBRC 100824 / MB4) (Thermoanaerobacter tengcongensis).